We begin with the raw amino-acid sequence, 119 residues long: uncharacterized protein (119 aa).

One can recognise an ABC transmembrane type-1 domain in the interval 1 to 112 (MVFNMRSTRG…FISSCLLLVL (112 aa)). 2 consecutive transmembrane segments (helical) span residues 51–73 (VLAW…ATRF) and 91–111 (FEIA…LLLV).

Belongs to the binding-protein-dependent transport system permease family. CysTW subfamily.

The protein localises to the cell membrane. This is an uncharacterized protein from Haemophilus influenzae (strain ATCC 51907 / DSM 11121 / KW20 / Rd).